Reading from the N-terminus, the 102-residue chain is Small ribosomal subunit protein uS10 (102 aa).

The protein belongs to the universal ribosomal protein uS10 family. As to quaternary structure, part of the 30S ribosomal subunit.

In terms of biological role, involved in the binding of tRNA to the ribosomes. This Leifsonia xyli subsp. xyli (strain CTCB07) protein is Small ribosomal subunit protein uS10.